The sequence spans 171 residues: UPF0303 protein YPK_1581 (171 aa).

Belongs to the UPF0303 family.

In Yersinia pseudotuberculosis serotype O:3 (strain YPIII), this protein is UPF0303 protein YPK_1581.